We begin with the raw amino-acid sequence, 292 residues long: Protein rogdi homolog (292 aa).

The segment covering 1–12 (MEVQSLTITTNY) has biased composition (polar residues). A disordered region spans residues 1–25 (MEVQSLTITTNYPPKPASPNPQDIR).

The protein belongs to the rogdi family.

The protein resides in the nucleus envelope. The polypeptide is Protein rogdi homolog (Caenorhabditis elegans).